A 364-amino-acid chain; its full sequence is Histidinol-phosphate aminotransferase (364 aa).

The residue at position 226 (Lys226) is an N6-(pyridoxal phosphate)lysine.

This sequence belongs to the class-II pyridoxal-phosphate-dependent aminotransferase family. Histidinol-phosphate aminotransferase subfamily. Homodimer. It depends on pyridoxal 5'-phosphate as a cofactor.

It catalyses the reaction L-histidinol phosphate + 2-oxoglutarate = 3-(imidazol-4-yl)-2-oxopropyl phosphate + L-glutamate. Its pathway is amino-acid biosynthesis; L-histidine biosynthesis; L-histidine from 5-phospho-alpha-D-ribose 1-diphosphate: step 7/9. This chain is Histidinol-phosphate aminotransferase, found in Campylobacter jejuni (strain RM1221).